The following is a 130-amino-acid chain: Small ribosomal subunit protein uS8 (130 aa).

Belongs to the universal ribosomal protein uS8 family. Part of the 30S ribosomal subunit. Contacts proteins S5 and S12.

Functionally, one of the primary rRNA binding proteins, it binds directly to 16S rRNA central domain where it helps coordinate assembly of the platform of the 30S subunit. The polypeptide is Small ribosomal subunit protein uS8 (Saccharophagus degradans (strain 2-40 / ATCC 43961 / DSM 17024)).